The chain runs to 192 residues: uncharacterized protein (192 aa).

The region spanning 29–160 (RRQAAVLIPV…PLDIYRRGDS (132 aa)) is the Nudix hydrolase domain. The Nudix box motif lies at 67-89 (GAVDSSDASLIAAALREAQEEVA). Mg(2+) is bound by residues E83 and E87.

This sequence belongs to the Nudix hydrolase family. PCD1 subfamily. Mn(2+) is required as a cofactor. It depends on Mg(2+) as a cofactor.

Probably mediates the hydrolysis of some nucleoside diphosphate derivatives. This is an uncharacterized protein from Citrobacter koseri (strain ATCC BAA-895 / CDC 4225-83 / SGSC4696).